The following is a 147-amino-acid chain: Ribosomal RNA large subunit methyltransferase H (147 aa).

S-adenosyl-L-methionine is bound by residues L64, G95, and 114 to 119 (LSSLTL).

The protein belongs to the RNA methyltransferase RlmH family. In terms of assembly, homodimer.

It localises to the cytoplasm. The catalysed reaction is pseudouridine(1915) in 23S rRNA + S-adenosyl-L-methionine = N(3)-methylpseudouridine(1915) in 23S rRNA + S-adenosyl-L-homocysteine + H(+). In terms of biological role, specifically methylates the pseudouridine at position 1915 (m3Psi1915) in 23S rRNA. The protein is Ribosomal RNA large subunit methyltransferase H of Polynucleobacter asymbioticus (strain DSM 18221 / CIP 109841 / QLW-P1DMWA-1) (Polynucleobacter necessarius subsp. asymbioticus).